A 350-amino-acid polypeptide reads, in one-letter code: tRNA dimethylallyltransferase (350 aa).

A disordered region spans residues 1-20 (MMNTERPAGPLRPPHPPHPP). Over residues 10 to 20 (PLRPPHPPHPP) the composition is skewed to pro residues. ATP is bound at residue 27–34 (GPTASGKT). Position 29–34 (29–34 (TASGKT)) interacts with substrate. Interaction with substrate tRNA stretches follow at residues 52-55 (DSAL), 176-180 (QRIAR), and 273-278 (RCVGYR).

Belongs to the IPP transferase family. As to quaternary structure, monomer. Requires Mg(2+) as cofactor.

The catalysed reaction is adenosine(37) in tRNA + dimethylallyl diphosphate = N(6)-dimethylallyladenosine(37) in tRNA + diphosphate. Catalyzes the transfer of a dimethylallyl group onto the adenine at position 37 in tRNAs that read codons beginning with uridine, leading to the formation of N6-(dimethylallyl)adenosine (i(6)A). This Albidiferax ferrireducens (strain ATCC BAA-621 / DSM 15236 / T118) (Rhodoferax ferrireducens) protein is tRNA dimethylallyltransferase.